A 397-amino-acid chain; its full sequence is Lysophospholipid transporter LplT (397 aa).

At 1 to 17 (MSESVHTNTSLWSKGMK) the chain is on the periplasmic side. The chain crosses the membrane as a helical span at residues 18 to 38 (AVIVAQFLSAFGDNALLFATL). At 39 to 52 (ALLKAQFYPEWSQP) the chain is on the cytoplasmic side. A helical membrane pass occupies residues 53-73 (ILQMVFVGAYILFAPFVGQVA). Over 74–90 (DSFAKGRVMMFANGLKL) the chain is Periplasmic. Residues 91–111 (LGAASICFGINPFLGYTLVGV) form a helical membrane-spanning segment. The Cytoplasmic portion of the chain corresponds to 112-144 (GAAAYSPAKYGILGELTTGSKLVKANGLMEAST). Residues 145 to 165 (IAAILLGSVAGGVLADWHVLV) traverse the membrane as a helical segment. Residue alanine 166 is a topological domain, periplasmic. A helical transmembrane segment spans residues 167-187 (LAACALAYGGAVVANIYIPKL). At 188–226 (AAARPGQSWNLINMTRSFLNACTSLWRNGETRFSLVGTS) the chain is on the cytoplasmic side. A helical membrane pass occupies residues 227–247 (LFWGAGVTLRFLLVLWVPVAL). At 248–256 (GITDNATPT) the chain is on the periplasmic side. Residues 257 to 277 (YLNAMVAIGIVVGAGAAAKLV) form a helical membrane-spanning segment. The Cytoplasmic segment spans residues 278 to 280 (TLE). Residues 281–301 (TMSRCMPAGILIGVVVLIFSL) traverse the membrane as a helical segment. The Periplasmic portion of the chain corresponds to 302–304 (QHE). The helical transmembrane segment at 305-325 (LLPAYALLMLIGVMGGFFVVP) threads the bilayer. At 326–343 (LNALLQERGKKSVGAGNA) the chain is on the cytoplasmic side. Residues 344 to 364 (IAVQNLGENSAMLLMLGIYSL) form a helical membrane-spanning segment. At 365–366 (AV) the chain is on the periplasmic side. Residues 367 to 387 (MVGIPVVPIGIGFGALFALAI) form a helical membrane-spanning segment. Topologically, residues 388-397 (TALWIWQRRH) are cytoplasmic.

The protein belongs to the major facilitator superfamily. LplT (TC 2.A.1.42) family.

The protein localises to the cell inner membrane. Functionally, catalyzes the facilitated diffusion of 2-acyl-glycero-3-phosphoethanolamine (2-acyl-GPE) into the cell. In Shigella sonnei (strain Ss046), this protein is Lysophospholipid transporter LplT.